The sequence spans 345 residues: 3-isopropylmalate dehydrogenase (345 aa).

76–87 (GPKYDNAPVRPE) provides a ligand contact to NAD(+). Substrate is bound by residues R94, R104, R132, and D216. Mg(2+) contacts are provided by D216, D240, and D244. Position 274-286 (274-286 (GSAPDIAGQGIAN)) interacts with NAD(+).

Belongs to the isocitrate and isopropylmalate dehydrogenases family. LeuB type 1 subfamily. As to quaternary structure, homodimer. The cofactor is Mg(2+). Requires Mn(2+) as cofactor.

The protein localises to the cytoplasm. It carries out the reaction (2R,3S)-3-isopropylmalate + NAD(+) = 4-methyl-2-oxopentanoate + CO2 + NADH. It participates in amino-acid biosynthesis; L-leucine biosynthesis; L-leucine from 3-methyl-2-oxobutanoate: step 3/4. In terms of biological role, catalyzes the oxidation of 3-carboxy-2-hydroxy-4-methylpentanoate (3-isopropylmalate) to 3-carboxy-4-methyl-2-oxopentanoate. The product decarboxylates to 4-methyl-2 oxopentanoate. This Streptococcus thermophilus (strain CNRZ 1066) protein is 3-isopropylmalate dehydrogenase.